The sequence spans 215 residues: Probable phosphoglycerate mutase GpmB (215 aa).

Substrate-binding positions include 8 to 15 (RHGETQWN), 21 to 22 (QG), arginine 58, arginine 60, 82 to 85 (ELNM), 104 to 105 (RR), and 151 to 152 (GI). Histidine 9 acts as the Tele-phosphohistidine intermediate in catalysis. The active-site Proton donor/acceptor is the glutamate 82.

It belongs to the phosphoglycerate mutase family. GpmB subfamily.

It carries out the reaction (2R)-2-phosphoglycerate = (2R)-3-phosphoglycerate. Its pathway is carbohydrate degradation; glycolysis; pyruvate from D-glyceraldehyde 3-phosphate: step 3/5. The chain is Probable phosphoglycerate mutase GpmB from Escherichia coli O9:H4 (strain HS).